The sequence spans 439 residues: Na(+)/H(+) antiporter NhaA (439 aa).

A run of 11 helical transmembrane segments spans residues 12-32 (SMNIAASILLFVAAIAAAIIA), 67-87 (MIEFINDGLMTIFFLLVGLEI), 103-123 (ALPFIAACGGMLFPVIVYMSI), 133-153 (GLAIPMATDIAFSLGVLSLLG), 162-182 (IFLTAFAVVDDIGGILVIALF), 186-206 (HVSYGYILIAALLYVLLYFIG), 214-234 (IFFLVIGVVIWYLFLQSGIHS), 314-334 (ILPLFAFVNAGVVFSGGGELV), 341-361 (VAAGLLFGKFAGIYFFTWLAI), 379-399 (GIALLGGIGFTVSLFIANLSF), and 412-432 (FGVLSGTILSGLLGYIVLRIV).

Belongs to the NhaA Na(+)/H(+) (TC 2.A.33) antiporter family.

The protein resides in the cell inner membrane. It catalyses the reaction Na(+)(in) + 2 H(+)(out) = Na(+)(out) + 2 H(+)(in). Functionally, na(+)/H(+) antiporter that extrudes sodium in exchange for external protons. In Bacteroides thetaiotaomicron (strain ATCC 29148 / DSM 2079 / JCM 5827 / CCUG 10774 / NCTC 10582 / VPI-5482 / E50), this protein is Na(+)/H(+) antiporter NhaA.